The sequence spans 141 residues: Hemoglobin subunit alpha (141 aa).

In terms of domain architecture, Globin spans 1-141; sequence VLSPADKTNV…VSTVLTSKYR (141 aa). Phosphoserine is present on serine 3. Lysine 7 bears the N6-succinyllysine mark. Phosphothreonine is present on threonine 8. At lysine 11 the chain carries N6-succinyllysine. Lysine 16 is subject to N6-acetyllysine; alternate. Lysine 16 carries the N6-succinyllysine; alternate modification. Tyrosine 24 is subject to Phosphotyrosine. A Phosphoserine modification is found at serine 35. Lysine 40 is subject to N6-succinyllysine. Serine 49 carries the phosphoserine modification. Residue histidine 58 participates in O2 binding. Histidine 87 contributes to the heme b binding site. Serine 102 bears the Phosphoserine mark. Threonine 108 is modified (phosphothreonine). Position 124 is a phosphoserine (serine 124). Phosphothreonine is present on residues threonine 134 and threonine 137. A Phosphoserine modification is found at serine 138.

The protein belongs to the globin family. As to quaternary structure, heterotetramer of two alpha chains and two beta chains. In terms of tissue distribution, red blood cells.

In terms of biological role, involved in oxygen transport from the lung to the various peripheral tissues. Its function is as follows. Hemopressin acts as an antagonist peptide of the cannabinoid receptor CNR1. Hemopressin-binding efficiently blocks cannabinoid receptor CNR1 and subsequent signaling. The protein is Hemoglobin subunit alpha (HBA) of Lutra lutra (European river otter).